The sequence spans 168 residues: Cyclin-dependent kinase 4 inhibitor C (168 aa).

ANK repeat units follow at residues 4 to 33 (PWGNELASAAARGDLEQLTSLLQNNVNVNA), 37 to 65 (FGRTALQVMKLGNPEIARRLLLRGANPDL), 69 to 98 (TGFAVIHDAARAGFLDTLQTLLEFQADVNI), and 102 to 132 (EGNLPLHLAAKEGHLRVVEFLVKHTASNVGH).

Belongs to the CDKN2 cyclin-dependent kinase inhibitor family. In terms of assembly, heterodimer of p18 with CDK6. In terms of tissue distribution, highest levels found in skeletal muscle. Also found in pancreas and heart.

In terms of biological role, interacts strongly with CDK6, weakly with CDK4. Inhibits cell growth and proliferation with a correlated dependence on endogenous retinoblastoma protein RB. This Homo sapiens (Human) protein is Cyclin-dependent kinase 4 inhibitor C (CDKN2C).